The sequence spans 122 residues: UPF0145 protein BceJ2315_57450 (122 aa).

It belongs to the UPF0145 family.

The protein is UPF0145 protein BceJ2315_57450 of Burkholderia cenocepacia (strain ATCC BAA-245 / DSM 16553 / LMG 16656 / NCTC 13227 / J2315 / CF5610) (Burkholderia cepacia (strain J2315)).